The chain runs to 160 residues: Large ribosomal subunit protein uL15 (160 aa).

Over residues 1-13 (MKLHELSDNDGAA) the composition is skewed to basic and acidic residues. Positions 1 to 42 (MKLHELSDNDGAAKKRKRVGRGPGSGTGKMGGRGIKGQKSRS) are disordered. Over residues 21-35 (RGPGSGTGKMGGRGI) the composition is skewed to gly residues.

Belongs to the universal ribosomal protein uL15 family. In terms of assembly, part of the 50S ribosomal subunit.

Binds to the 23S rRNA. The chain is Large ribosomal subunit protein uL15 from Roseobacter denitrificans (strain ATCC 33942 / OCh 114) (Erythrobacter sp. (strain OCh 114)).